The following is a 276-amino-acid chain: MANFKGHALPGSFFLIVGLWWSLKYPLKYFYQKEKSNQLTHHYQRLEIIEAAIRTLFAVIGILVEQFVPDGPHLHLYHEDHWVKLMNWQHSTMYLFFAVSGIMDMLTYLITHVPLGLDRLVMALAAFNEGFLFYYHVRDRPPLDQHIHSLLLYTVFGGALSLAVEVVLRDNIVLELFRTSLLLLQGTWFWQIGFVLFPPFGGPEWDQNSHDNIMFVTMCFCWHYLAALCILAASYSLVYCFLTRVKRPEDREVIGIQKLRSDHTYRKALLSGSDEE.

Transmembrane regions (helical) follow at residues 7–27, 48–68, 95–115, 147–167, 181–201, and 213–233; these read HALPGSFFLIVGLWWSLKYPL, IIEAAIRTLFAVIGILVEQFV, LFFAVSGIMDMLTYLITHVPL, IHSLLLYTVFGGALSLAVEVV, LLLLQGTWFWQIGFVLFPPFG, and IMFVTMCFCWHYLAALCILAA. A phosphoserine mark is found at Ser271 and Ser273.

The protein belongs to the TMEM45 family.

Its subcellular location is the endosome membrane. It is found in the lysosome membrane. It localises to the golgi apparatus. The protein localises to the trans-Golgi network membrane. Functionally, plays a role in innate immunity. The polypeptide is Transmembrane protein 45B (TMEM45B) (Bos taurus (Bovine)).